A 300-amino-acid polypeptide reads, in one-letter code: MTAVVLDGVATASAVKSELAVRIRALREQGLVPGLGTLLVGDDPGSRSYVAGKHRDCAEVGIESIRVDLPADATEADVRTAIERLNSDPAVTGYIVQLPLPAGIDENAMLELIDPSKDADGLHPTNLGRLVLGVQGELTSPLPCTPAGIVEMLQRYDVPIAGQHVVVVGRGLTVGRPLGLLLTRKGLDATVTLTHSRTRDIEQEVRRADIVVAAVGAAHLVKPEWVKPGAAVLDVGITRVVDPETGKARLTGDVDPAVAEVAGHLSPNPRGVGPMTRAMLLANVVQAAERDARLAAELRG.

Residues 169–171, Ser-196, and Ile-237 each bind NADP(+); that span reads GRG.

Belongs to the tetrahydrofolate dehydrogenase/cyclohydrolase family. As to quaternary structure, homodimer.

It catalyses the reaction (6R)-5,10-methylene-5,6,7,8-tetrahydrofolate + NADP(+) = (6R)-5,10-methenyltetrahydrofolate + NADPH. The catalysed reaction is (6R)-5,10-methenyltetrahydrofolate + H2O = (6R)-10-formyltetrahydrofolate + H(+). The protein operates within one-carbon metabolism; tetrahydrofolate interconversion. In terms of biological role, catalyzes the oxidation of 5,10-methylenetetrahydrofolate to 5,10-methenyltetrahydrofolate and then the hydrolysis of 5,10-methenyltetrahydrofolate to 10-formyltetrahydrofolate. The chain is Bifunctional protein FolD from Clavibacter sepedonicus (Clavibacter michiganensis subsp. sepedonicus).